A 345-amino-acid chain; its full sequence is Meiotic recombination protein rec12 (345 aa).

The region spanning 5–137 (DKKKVVRSWI…LNVEASAKGL (133 aa)) is the Topo IIA-type catalytic domain. Y98 serves as the catalytic O-(5'-phospho-DNA)-tyrosine intermediate. Mg(2+) contacts are provided by E179 and D229.

Belongs to the TOP6A family. Component of the DSB catalytic core (DSBC) complex, composed of at least rec12, rec6 and rec14. The complex interacts with mde2. It depends on Mg(2+) as a cofactor.

It is found in the cytoplasm. Its subcellular location is the nucleus. It carries out the reaction ATP-dependent breakage, passage and rejoining of double-stranded DNA.. Required for formation of the double-strand breaks (DSBs) that initiate meiotic recombination. Required for crossover recombination and chiasmatic segregation of chromosomes during meiosis I. Also involved in the faithful equational segregation of chromosomes during meiosis II. This Schizosaccharomyces pombe (strain 972 / ATCC 24843) (Fission yeast) protein is Meiotic recombination protein rec12.